A 389-amino-acid polypeptide reads, in one-letter code: Sulfate adenylyltransferase (389 aa).

The protein belongs to the sulfate adenylyltransferase family.

The catalysed reaction is sulfate + ATP + H(+) = adenosine 5'-phosphosulfate + diphosphate. It participates in sulfur metabolism; hydrogen sulfide biosynthesis; sulfite from sulfate: step 1/3. The chain is Sulfate adenylyltransferase from Deinococcus geothermalis (strain DSM 11300 / CIP 105573 / AG-3a).